A 368-amino-acid polypeptide reads, in one-letter code: Ferredoxin--NADP reductase (368 aa).

Residues aspartate 56, glutamine 64, tyrosine 69, valine 109, phenylalanine 144, aspartate 310, and threonine 351 each contribute to the FAD site.

Belongs to the ferredoxin--NADP reductase type 2 family. As to quaternary structure, homodimer. FAD is required as a cofactor.

The catalysed reaction is 2 reduced [2Fe-2S]-[ferredoxin] + NADP(+) + H(+) = 2 oxidized [2Fe-2S]-[ferredoxin] + NADPH. The chain is Ferredoxin--NADP reductase from Leptothrix cholodnii (strain ATCC 51168 / LMG 8142 / SP-6) (Leptothrix discophora (strain SP-6)).